We begin with the raw amino-acid sequence, 170 residues long: Lipoprotein signal peptidase (170 aa).

The next 3 helical transmembrane spans lie at 9 to 29 (FNIFIFIISLIFFDQLSKYLV), 72 to 92 (IFFLAMPIFILIFIFSLSLKE), and 96 to 118 (IARISLLLIFSGGVGNVIDRLFR). Catalysis depends on residues D124 and D146. A helical transmembrane segment spans residues 143–163 (NFADSYVVIGMILFLVYDFFI).

Belongs to the peptidase A8 family.

It is found in the cell inner membrane. The catalysed reaction is Release of signal peptides from bacterial membrane prolipoproteins. Hydrolyzes -Xaa-Yaa-Zaa-|-(S,diacylglyceryl)Cys-, in which Xaa is hydrophobic (preferably Leu), and Yaa (Ala or Ser) and Zaa (Gly or Ala) have small, neutral side chains.. Its pathway is protein modification; lipoprotein biosynthesis (signal peptide cleavage). In terms of biological role, this protein specifically catalyzes the removal of signal peptides from prolipoproteins. The sequence is that of Lipoprotein signal peptidase from Borreliella afzelii (strain PKo) (Borrelia afzelii).